Here is a 165-residue protein sequence, read N- to C-terminus: MENSHNESEEQPQSTPKVEEEQPAVEQSPENQCSEDDQSSEDLSSEEQSSDEEFFPEELLPELLPEMLLCEDRPPQECLPQKNAFEDRIPMEQPPCGIGKHKLEEGSFKERLARSRPQFRGDIHGRNLSNEEMIRAADELEEMKRVRNKLMIMHWKAKRSRPYPI.

Disordered stretches follow at residues 1 to 66 (MENS…LLPE) and 89 to 124 (IPMEQPPCGIGKHKLEEGSFKERLARSRPQFRGDIH). The segment covering 33-60 (CSEDDQSSEDLSSEEQSSDEEFFPEELL) has biased composition (acidic residues). A compositionally biased stretch (basic and acidic residues) spans 101 to 124 (HKLEEGSFKERLARSRPQFRGDIH).

It belongs to the TFS-II family. TFA subfamily.

It is found in the nucleus. Functionally, may be involved in transcriptional regulation. Modulates various viral and cellular promoters in a promoter context-dependent manner. Does not bind DNA directly. The polypeptide is Transcription elongation factor A protein-like 1 (Rattus norvegicus (Rat)).